Here is a 206-residue protein sequence, read N- to C-terminus: Ribosomal RNA large subunit methyltransferase E (206 aa).

Residues glycine 60, tryptophan 62, aspartate 80, aspartate 96, and aspartate 121 each coordinate S-adenosyl-L-methionine. Lysine 161 acts as the Proton acceptor in catalysis.

This sequence belongs to the class I-like SAM-binding methyltransferase superfamily. RNA methyltransferase RlmE family.

The protein resides in the cytoplasm. The enzyme catalyses uridine(2552) in 23S rRNA + S-adenosyl-L-methionine = 2'-O-methyluridine(2552) in 23S rRNA + S-adenosyl-L-homocysteine + H(+). Functionally, specifically methylates the uridine in position 2552 of 23S rRNA at the 2'-O position of the ribose in the fully assembled 50S ribosomal subunit. In Legionella pneumophila (strain Paris), this protein is Ribosomal RNA large subunit methyltransferase E.